The following is a 476-amino-acid chain: Cysteine--tRNA ligase (476 aa).

Residue Cys-28 coordinates Zn(2+). The short motif at 30–40 (PTVYDHTHLGH) is the 'HIGH' region element. Zn(2+) is bound by residues Cys-208, His-233, and Glu-237. The 'KMSKS' region motif lies at 265-269 (KMSKS). Lys-268 provides a ligand contact to ATP.

This sequence belongs to the class-I aminoacyl-tRNA synthetase family. Zn(2+) serves as cofactor.

The protein resides in the cytoplasm. It catalyses the reaction tRNA(Cys) + L-cysteine + ATP = L-cysteinyl-tRNA(Cys) + AMP + diphosphate. This Methanococcus maripaludis (strain C7 / ATCC BAA-1331) protein is Cysteine--tRNA ligase.